Here is a 402-residue protein sequence, read N- to C-terminus: Formate-dependent phosphoribosylglycinamide formyltransferase (402 aa).

N(1)-(5-phospho-beta-D-ribosyl)glycinamide contacts are provided by residues 23 to 24 (EL) and E83. ATP-binding positions include R116, K157, 162 to 167 (SSGKGQ), 197 to 200 (ESQI), and E205. One can recognise an ATP-grasp domain in the interval 121-316 (RLAAEELGLP…EFELHARAIL (196 aa)). 2 residues coordinate Mg(2+): E275 and E287. Residues D294, K363, and 370–371 (RR) contribute to the N(1)-(5-phospho-beta-D-ribosyl)glycinamide site.

Belongs to the PurK/PurT family. Homodimer.

It catalyses the reaction N(1)-(5-phospho-beta-D-ribosyl)glycinamide + formate + ATP = N(2)-formyl-N(1)-(5-phospho-beta-D-ribosyl)glycinamide + ADP + phosphate + H(+). Its pathway is purine metabolism; IMP biosynthesis via de novo pathway; N(2)-formyl-N(1)-(5-phospho-D-ribosyl)glycinamide from N(1)-(5-phospho-D-ribosyl)glycinamide (formate route): step 1/1. In terms of biological role, involved in the de novo purine biosynthesis. Catalyzes the transfer of formate to 5-phospho-ribosyl-glycinamide (GAR), producing 5-phospho-ribosyl-N-formylglycinamide (FGAR). Formate is provided by PurU via hydrolysis of 10-formyl-tetrahydrofolate. This chain is Formate-dependent phosphoribosylglycinamide formyltransferase, found in Acinetobacter baumannii (strain ATCC 17978 / DSM 105126 / CIP 53.77 / LMG 1025 / NCDC KC755 / 5377).